A 1133-amino-acid polypeptide reads, in one-letter code: SH3 and PX domain-containing protein 2A (1133 aa).

A PX domain is found at 4–128 (YCVQDATVVD…RFFEARPEDV (125 aa)). In terms of domain architecture, SH3 1 spans 166–225 (MILEQYVVVSNYKKQENSELSLQAGEVVDVIEKNESGWWFVSTSEEQGWVPATYLEAQNG). Threonine 256 bears the Phosphothreonine mark. Residues 266 to 325 (SREEKYVTVQPYTSQSKDEIGFEKGVTVEVIRKNLEGWWYIRYLGKEGWAPASYLKKAKD) enclose the SH3 2 domain. 2 positions are modified to phosphoserine: serine 406 and serine 421. Disordered regions lie at residues 415 to 446 (QRAQ…PPEP), 505 to 840 (RKKP…EWEG), 899 to 924 (NEQP…GKSD), and 941 to 964 (QSKK…SGTP). The 60-residue stretch at 448–507 (SVEVEYYTIAEFQSCISDGISFRGGQKAEVIDKNSGGWWYVQIGEKEGWAPASYIDKRKK) folds into the SH3 3 domain. Over residues 546–555 (DSPRKLKYEE) the composition is skewed to basic and acidic residues. Serine 547 and serine 567 each carry phosphoserine. Residues 567 to 576 (SEPELSEEPV) are compositionally biased toward acidic residues. Over residues 577–586 (EDRASGERRP) the composition is skewed to basic and acidic residues. Serine 593 bears the Phosphoserine mark. Over residues 608–620 (SSEDVALEEETIY) the composition is skewed to acidic residues. Composition is skewed to low complexity over residues 634-652 (SARG…SLSL), 658-670 (PKSG…SLLK), and 686-715 (SSAS…SKTS). A Phosphoserine modification is found at serine 644. Threonine 731 is modified (phosphothreonine). A phosphoserine mark is found at serine 767, serine 769, and serine 819. Threonine 829 carries the phosphothreonine modification. Positions 840–899 (GPATSYMTCSAYQKVQDSEISFPAGVEVQVLEKQESGWWYVRFGELEGWAPSHYLVLDEN) constitute an SH3 4 domain. The stretch at 917 to 946 (RQNEGKSDSLEKIERRVQALNTVNQSKKAT) forms a coiled coil. Residues serine 1002, serine 1016, serine 1017, and serine 1038 each carry the phosphoserine modification. The disordered stretch occupies residues 1029–1059 (KGRLAERAASQGSDSPLLPAQRNSIPVSPVR). The SH3 5 domain maps to 1072 to 1133 (NLKDVYVSIA…VPSNYLEKKN (62 aa)).

Belongs to the SH3PXD2 family. Interacts (via N-terminus) with CYBA. Interacts with ADAM12, ADAM15 and ADAM19. Interacts with NOXO1. Interacts (via SH3 domains) with NOXA1. Interacts with FASLG. Interacts (via PX domain) with RAB40B (GTP-bound); interaction promotes invadopodia-mediated extracellular matrix degradation. Post-translationally, tyrosine phosphorylated by SRC. Phosphorylation plays a regulatory role in the protein localization. The intramolecular interaction of the PX domain with the third SH3 domain maintains the protein in the cytoplasm and phosphorylation disrupts this interaction, resulting in the redistribution of the protein from cytoplasm to the perimembrane region. Phosphorylated on serine upon DNA damage, probably by ATM or ATR. Found in several cancer cell lines, particularly invasive breast carcinomas and melanomas.

It localises to the cytoplasm. It is found in the cell projection. The protein localises to the podosome. In terms of biological role, adapter protein involved in invadopodia and podosome formation, extracellular matrix degradation and invasiveness of some cancer cells. Binds matrix metalloproteinases (ADAMs), NADPH oxidases (NOXs) and phosphoinositides. Acts as an organizer protein that allows NOX1- or NOX3-dependent reactive oxygen species (ROS) generation and ROS localization. In association with ADAM12, mediates the neurotoxic effect of amyloid-beta peptide. In Homo sapiens (Human), this protein is SH3 and PX domain-containing protein 2A.